The sequence spans 227 residues: dTTP/UTP pyrophosphatase (227 aa).

D98 functions as the Proton acceptor in the catalytic mechanism.

Belongs to the Maf family. YhdE subfamily. It depends on a divalent metal cation as a cofactor.

The protein localises to the cytoplasm. It catalyses the reaction dTTP + H2O = dTMP + diphosphate + H(+). The catalysed reaction is UTP + H2O = UMP + diphosphate + H(+). Functionally, nucleoside triphosphate pyrophosphatase that hydrolyzes dTTP and UTP. May have a dual role in cell division arrest and in preventing the incorporation of modified nucleotides into cellular nucleic acids. This is dTTP/UTP pyrophosphatase from Bartonella quintana (strain Toulouse) (Rochalimaea quintana).